Reading from the N-terminus, the 76-residue chain is Peptide ARACIN 1 (76 aa).

An N-terminal signal peptide occupies residues 1–22 (MAMKTSHVLLLCLMFVIGFVEA). Positions 23-35 (RRSDTGPDISTPP) are cleaved as a propeptide — removed in mature form. A SxS motif essential for MIK2 binding motif is present at residues 36–38 (SGS). Positions 36–49 (SGSCGASIAEFNSS) match the SCOOP motif motif. Positions 56 to 76 (APPCRRPRLQNSEDVTHTTLP) are disordered. Residues 64–76 (LQNSEDVTHTTLP) show a composition bias toward polar residues.

The protein belongs to the serine rich endogenous peptide (SCOOP) phytocytokine family. Interacts with MIK2 (via extracellular leucine-rich repeat domain); this interaction triggers the formation of complex between MIK2 and the BAK1/SERK3 and SERK4 coreceptors, and subsequent BAK1 activation by phosphorylation. Mainly expressed in young developing leaves, hydathodes, immature flowers and elongating pollen tubes.

It localises to the cell membrane. Its subcellular location is the secreted. The protein localises to the extracellular space. The protein resides in the apoplast. It is found in the endoplasmic reticulum. Its function is as follows. Brassicaceae-specific phytocytokine (plant endogenous peptide released into the apoplast) perceived by MIK2 in a BAK1/SERK3 and SERK4 coreceptors-dependent manner, that modulates various physiological and antimicrobial processes including growth prevention and reactive oxygen species (ROS) response regulation. Inhibits the fungal growth of Alternaria brassicicola, Sclerotinia sclerotiorum, Fusarium graminearum, yeast (Saccharomyces) and Botrytis cinerea, thus being an antimicrobial peptide (AMP). Promotes resistance to A.brassicicola and B.cinerea. The polypeptide is Peptide ARACIN 1 (Arabidopsis thaliana (Mouse-ear cress)).